The sequence spans 279 residues: 2-dehydro-3-deoxyphosphooctonate aldolase (279 aa).

It belongs to the KdsA family.

It localises to the cytoplasm. It carries out the reaction D-arabinose 5-phosphate + phosphoenolpyruvate + H2O = 3-deoxy-alpha-D-manno-2-octulosonate-8-phosphate + phosphate. Its pathway is carbohydrate biosynthesis; 3-deoxy-D-manno-octulosonate biosynthesis; 3-deoxy-D-manno-octulosonate from D-ribulose 5-phosphate: step 2/3. The protein operates within bacterial outer membrane biogenesis; lipopolysaccharide biosynthesis. This is 2-dehydro-3-deoxyphosphooctonate aldolase from Desulfosudis oleivorans (strain DSM 6200 / JCM 39069 / Hxd3) (Desulfococcus oleovorans).